The chain runs to 267 residues: Short chain dehydrogenase claC (267 aa).

NADP(+) contacts are provided by I27, D73, N100, and R133. Catalysis depends on proton donor residues S149 and S150. NADP(+)-binding residues include Y164, K168, and T199. Residue Y164 is the Proton acceptor of the active site. The active-site Lowers pKa of active site Tyr is K168.

This sequence belongs to the short-chain dehydrogenases/reductases (SDR) family.

It functions in the pathway pigment biosynthesis. Its function is as follows. Non-reducing polyketide synthase; part of the gene cluster that mediates the biosynthesis of the bianthraquinone cladofulvin, a conidial pigment not required for virulence but that plays a role in fitness and resistance to environmental stresses including UV light and low-temperature stress. The pathway begins with the synthesis of atrochrysone thioester by the polyketide synthase (PKS) claG. The atrochrysone carboxyl ACP thioesterase claF then breaks the thioester bond and releases the atrochrysone carboxylic acid from claG. This compound is decarboxylated by claH to yield emodin, which is further converted to chrysophanol hydroquinone by the reductase claC and the dehydratase claB. The cytochrome monooxygenase P450 claM then catalyzes the dimerization of nataloe-emodin to cladofulvin. The sequence is that of Short chain dehydrogenase claC from Passalora fulva (Tomato leaf mold).